The following is a 177-amino-acid chain: Ribosome maturation factor RimM (177 aa).

The PRC barrel domain maps to D104–L176.

The protein belongs to the RimM family. Binds ribosomal protein uS19.

The protein resides in the cytoplasm. Functionally, an accessory protein needed during the final step in the assembly of 30S ribosomal subunit, possibly for assembly of the head region. Essential for efficient processing of 16S rRNA. May be needed both before and after RbfA during the maturation of 16S rRNA. It has affinity for free ribosomal 30S subunits but not for 70S ribosomes. In Fervidobacterium nodosum (strain ATCC 35602 / DSM 5306 / Rt17-B1), this protein is Ribosome maturation factor RimM.